A 387-amino-acid chain; its full sequence is ATP phosphoribosyltransferase regulatory subunit (387 aa).

It belongs to the class-II aminoacyl-tRNA synthetase family. HisZ subfamily. In terms of assembly, heteromultimer composed of HisG and HisZ subunits.

The protein resides in the cytoplasm. The protein operates within amino-acid biosynthesis; L-histidine biosynthesis; L-histidine from 5-phospho-alpha-D-ribose 1-diphosphate: step 1/9. Its function is as follows. Required for the first step of histidine biosynthesis. May allow the feedback regulation of ATP phosphoribosyltransferase activity by histidine. In Polynucleobacter asymbioticus (strain DSM 18221 / CIP 109841 / QLW-P1DMWA-1) (Polynucleobacter necessarius subsp. asymbioticus), this protein is ATP phosphoribosyltransferase regulatory subunit.